The following is a 238-amino-acid chain: uncharacterized protein (238 aa).

The next 6 membrane-spanning stretches (helical) occupy residues 24–44 (IFIAALIFIVITAICFTYMKN), 78–98 (GFLLSSPFIIYQITLFILPGL), 109–129 (ILFISIILFFSGIVFAYIILV), 156–176 (FILLLLFSTGIAFQIPIIQVI), 188–208 (MYAYWKYIVLGATVIAAIITP), and 216–236 (IIMSIAILALYSSGIIILKIL).

This sequence belongs to the TatC family.

Its subcellular location is the plastid. It localises to the chloroplast membrane. This is an uncharacterized protein from Gracilaria tenuistipitata var. liui (Red alga).